The following is a 430-amino-acid chain: MTVTQLRSAGRLAQLAGHVNGARQFSTRPALRKELQDAYILSAARTPTAKFNGSFLSVSAPKLGAVAIKAALEKSKVPVEKITDVYMGNVLQGSVGQAPARQAVIFAGLPKEIEATTINKVCASGLKAVTLAAQNIQMGLSEAQIAGGMENMSQVPYYVSRASGLPAFGHVKMEDGLIKDGLTDVYDQFHMGNCAENTVKNHNITREQQDEYAIQSYRNAQKAWEDKAFADEIAPVTVKSRKGETVIDTDEGFKDVKFDKIPSLKPAFVRDGSGTVTAANSSTLNDGASALVLGSKAIAQQYGSGSRVLAKICGYADAATAPIDFPVAPAKAVPIALERAGITKDQVAIWEFNEAFASVILANSKILGLEGAKVNPLGGAISLGHALGSSGSRILTTLLHQLKPGEYGVAAICNGGGAATALVVQRVESV.

The transit peptide at 1-32 (MTVTQLRSAGRLAQLAGHVNGARQFSTRPALR) directs the protein to the mitochondrion. The active-site Acyl-thioester intermediate is the Cys-122. K(+) is bound at residue Tyr-217. Lys-260 lines the CoA pocket. Residue Ala-278 participates in K(+) binding. A CoA-binding site is contributed by Ser-282. Residues His-385 and Cys-413 each act as proton acceptor in the active site. Asn-414 lines the chloride pocket.

The protein belongs to the thiolase-like superfamily. Thiolase family. As to quaternary structure, homotetramer. The cofactor is K(+).

Its subcellular location is the mitochondrion. It catalyses the reaction 2 acetyl-CoA = acetoacetyl-CoA + CoA. Its function is as follows. Mitochondrial acetyl-CoA acetyltransferase that catalyzes both the formation and degradation of acetoacetyl-CoA. Seems not to be involved in ergosterol biosynthesis. Plays an important role in growth, morphogenesis and maintaining mitochondrial function including the response to oxidative stresses. This Gibberella zeae (strain ATCC MYA-4620 / CBS 123657 / FGSC 9075 / NRRL 31084 / PH-1) (Wheat head blight fungus) protein is Acetyl-CoA acetyltransferase FG05087, mitochondrial.